We begin with the raw amino-acid sequence, 244 residues long: Phosphoadenosine 5'-phosphosulfate reductase (244 aa).

C239 acts as the Nucleophile; cysteine thiosulfonate intermediate in catalysis.

The protein belongs to the PAPS reductase family. CysH subfamily.

The protein resides in the cytoplasm. It carries out the reaction [thioredoxin]-disulfide + sulfite + adenosine 3',5'-bisphosphate + 2 H(+) = [thioredoxin]-dithiol + 3'-phosphoadenylyl sulfate. Its pathway is sulfur metabolism; hydrogen sulfide biosynthesis; sulfite from sulfate: step 3/3. Its function is as follows. Catalyzes the formation of sulfite from phosphoadenosine 5'-phosphosulfate (PAPS) using thioredoxin as an electron donor. This chain is Phosphoadenosine 5'-phosphosulfate reductase, found in Salmonella arizonae (strain ATCC BAA-731 / CDC346-86 / RSK2980).